The following is an 82-amino-acid chain: Small ribosomal subunit protein uS17 (82 aa).

It belongs to the universal ribosomal protein uS17 family. In terms of assembly, part of the 30S ribosomal subunit.

Functionally, one of the primary rRNA binding proteins, it binds specifically to the 5'-end of 16S ribosomal RNA. This Bradyrhizobium sp. (strain BTAi1 / ATCC BAA-1182) protein is Small ribosomal subunit protein uS17.